Here is a 312-residue protein sequence, read N- to C-terminus: Glyoxylate/hydroxypyruvate reductase A (312 aa).

Residue Arg227 is part of the active site. Catalysis depends on His275, which acts as the Proton donor.

It belongs to the D-isomer specific 2-hydroxyacid dehydrogenase family. GhrA subfamily.

Its subcellular location is the cytoplasm. It carries out the reaction glycolate + NADP(+) = glyoxylate + NADPH + H(+). The enzyme catalyses (R)-glycerate + NAD(+) = 3-hydroxypyruvate + NADH + H(+). It catalyses the reaction (R)-glycerate + NADP(+) = 3-hydroxypyruvate + NADPH + H(+). Its function is as follows. Catalyzes the NADPH-dependent reduction of glyoxylate and hydroxypyruvate into glycolate and glycerate, respectively. This is Glyoxylate/hydroxypyruvate reductase A from Klebsiella pneumoniae subsp. pneumoniae (strain ATCC 700721 / MGH 78578).